A 339-amino-acid polypeptide reads, in one-letter code: Cullin-associated NEDD8-dissociated protein 1, N-terminal part (339 aa).

HEAT repeat units lie at residues 5-42 (HTIQQNLNGLLSKLNDPDPDMRYMSLNDLYGILSNPCS) and 50-87 (ASATRLAEGLLKALDDQHGDVQNQALKCLGPLVARLPL).

Interacts with candA-C. Interacts with unneddylated cullins culA and culD; interaction occurs only when complexed with candA-C.

Its subcellular location is the nucleus. Its function is as follows. Assembly factor of SCF (SKP1-CUL1-F-box protein) E3 ubiquitin ligase complexes that promotes the exchange of the substrate-recognition F-box subunit in SCF complexes, thereby playing a key role in the cellular repertoire of SCF complexes. Acts as a F-box protein exchange factor when interacting with candA-C. The sequence is that of Cullin-associated NEDD8-dissociated protein 1, N-terminal part (candA-N) from Emericella nidulans (strain FGSC A4 / ATCC 38163 / CBS 112.46 / NRRL 194 / M139) (Aspergillus nidulans).